Reading from the N-terminus, the 854-residue chain is MDNNQNNFNQPGQQGFDQYQQQSGALVSYGYDANGNPVSDPSLAVYDANGMLINQNQYDQNQQQEYDQYGNPVGMLSGNVYSQENDPYYQQYNQQQNQGYEQQYDEYGNPIGLLPGSENQQNNQQQYDQYGNPIGMLPGGTNDQAYDPNQMQYDQYGNPVGMLAGVNANDQGYDYNQMQYDEYGNPVGMLPGGNANDQGYDYNQMQYDEYGNPPALYDNNQQDYYGYDQNQQYDQANNQLAVVDENYEQEQQVESNEEPAHEQDLREFLNNNSDTELVSYYEEEEDEKKPRNKKKQRQTAQARGLLPELATVNQPDQTPITPHLEAPVHYDENEELSTDDLSDDINLDQNQAVHHDAEDDVINIPIEDIESALLPKFEEIQRHNLEEIQKVKLEAAENFKVLQRANEELKSSNNELKTTNQQLKTSNEALEDSNKRIESQLQALLDSINDIKSKNNQPSQEEVDSRSKLEQRLEELAYKLDQTKEIIDETSESSRESFQQSKDQLIENFEKKIELLTEKLNQTQESFNQSQEAKQQQDKEFAQKIERIIEQTKEANDSLQNRVKESSLDMESKLENKFESFADKLTEITSKKISEKMTEQQASKKEEIDSLQSSFQKALSEVVSKVENYANQSQLQSQHLNQTLSYHQQQINNSLRQSAQMAQMAQMQHMMPQQMLMGMNNPYGFNHHTMMPPVHQYQQLPPPPPVQAPAQQLLPTINNPLQLPNENPTLFEKLMLANMFKQTINPPQPQPQALPQPHPQPQQLPPQILALPPTVVQQPNYLVPQPPRQPDYYSNRLNERMMLDDAYNAGYDEAVYELENQYYPPAYEYPEYEEIQPSFRRRGGRAKFDPYNNR.

Over residues 1-24 the composition is skewed to low complexity; the sequence is MDNNQNNFNQPGQQGFDQYQQQSG. A disordered region spans residues 1–33; the sequence is MDNNQNNFNQPGQQGFDQYQQQSGALVSYGYDA. Positions 91–109 are fibronectin-binding; the sequence is QYNQQQNQGYEQQYDEYGN. Disordered stretches follow at residues 247–327, 411–434, 743–766, and 835–854; these read YEQE…LEAP, SSNNELKTTNQQLKTSNEALEDSN, TINPPQPQPQALPQPHPQPQQLPP, and IQPSFRRRGGRAKFDPYNNR. A compositionally biased stretch (basic and acidic residues) spans 258–267; that stretch reads EPAHEQDLRE. Composition is skewed to polar residues over residues 311–320 and 411–428; these read TVNQPDQTPI and SSNNELKTTNQQLKTSNE. Residues 384-622 adopt a coiled-coil conformation; it reads NLEEIQKVKL…SSFQKALSEV (239 aa). A compositionally biased stretch (pro residues) spans 746–764; that stretch reads PPQPQPQALPQPHPQPQQL.

The protein resides in the cell membrane. In terms of biological role, binds immobilized fibronectin, specifically the gelatin/heparin-binding domain. This chain is Fibronectin-binding protein PlpA (plpA), found in Mycoplasmoides gallisepticum (strain R(low / passage 15 / clone 2)) (Mycoplasma gallisepticum).